A 600-amino-acid chain; its full sequence is Putative dehydrogenase XoxF (600 aa).

An N-terminal signal peptide occupies residues 1 to 21 (MKNLMNGACLALLMSGTAALA). Ca(2+) contacts are provided by Glu-192 and Asn-276. Asp-318 functions as the Proton acceptor in the catalytic mechanism.

The protein belongs to the bacterial PQQ dehydrogenase family. It depends on pyrroloquinoline quinone as a cofactor. Ca(2+) serves as cofactor.

In Paracoccus denitrificans, this protein is Putative dehydrogenase XoxF (xoxF).